The following is a 327-amino-acid chain: Probable cell division protein WhiA (327 aa).

A DNA-binding region (H-T-H motif) is located at residues 275-308 (SLEELGRLADPPMTKDAVAGRIRRLLSMADRKAK).

Belongs to the WhiA family.

In terms of biological role, involved in cell division and chromosome segregation. The sequence is that of Probable cell division protein WhiA from Mycobacterium marinum (strain ATCC BAA-535 / M).